The chain runs to 231 residues: Insertion sequence IS1162 putative ATP-binding protein (231 aa).

107–114 (GPTGVGKT) contacts ATP.

This sequence belongs to the IS21/IS1162 putative ATP-binding protein family.

The polypeptide is Insertion sequence IS1162 putative ATP-binding protein (Pseudomonas fluorescens).